The primary structure comprises 190 residues: Small ribosomal subunit protein uS7 (190 aa).

An N-acetylthreonine modification is found at T2.

It belongs to the universal ribosomal protein uS7 family. As to quaternary structure, component of the small ribosomal subunit. Part of the small subunit (SSU) processome, composed of more than 70 proteins and the RNA chaperone small nucleolar RNA (snoRNA) U3.

Its subcellular location is the cytoplasm. It is found in the nucleus. The protein resides in the nucleolus. Component of the small ribosomal subunit. The ribosome is a large ribonucleoprotein complex responsible for the synthesis of proteins in the cell. Part of the small subunit (SSU) processome, first precursor of the small eukaryotic ribosomal subunit. During the assembly of the SSU processome in the nucleolus, many ribosome biogenesis factors, an RNA chaperone and ribosomal proteins associate with the nascent pre-rRNA and work in concert to generate RNA folding, modifications, rearrangements and cleavage as well as targeted degradation of pre-ribosomal RNA by the RNA exosome. In Dictyostelium discoideum (Social amoeba), this protein is Small ribosomal subunit protein uS7 (rps5).